The following is a 157-amino-acid chain: 2-C-methyl-D-erythritol 2,4-cyclodiphosphate synthase (157 aa).

A divalent metal cation is bound by residues D9 and H11. Residues 9-11 and 35-36 contribute to the 4-CDP-2-C-methyl-D-erythritol 2-phosphate site; these read DVH and HS. A divalent metal cation is bound at residue H43. Residues 57 to 59, 62 to 66, 101 to 107, 133 to 136, F140, and R143 each bind 4-CDP-2-C-methyl-D-erythritol 2-phosphate; these read DIG, FPDTD, AEKPKMA, and TTTE.

Belongs to the IspF family. In terms of assembly, homotrimer. Requires a divalent metal cation as cofactor.

The enzyme catalyses 4-CDP-2-C-methyl-D-erythritol 2-phosphate = 2-C-methyl-D-erythritol 2,4-cyclic diphosphate + CMP. The protein operates within isoprenoid biosynthesis; isopentenyl diphosphate biosynthesis via DXP pathway; isopentenyl diphosphate from 1-deoxy-D-xylulose 5-phosphate: step 4/6. In terms of biological role, involved in the biosynthesis of isopentenyl diphosphate (IPP) and dimethylallyl diphosphate (DMAPP), two major building blocks of isoprenoid compounds. Catalyzes the conversion of 4-diphosphocytidyl-2-C-methyl-D-erythritol 2-phosphate (CDP-ME2P) to 2-C-methyl-D-erythritol 2,4-cyclodiphosphate (ME-CPP) with a corresponding release of cytidine 5-monophosphate (CMP). The chain is 2-C-methyl-D-erythritol 2,4-cyclodiphosphate synthase from Listeria monocytogenes serotype 4b (strain CLIP80459).